Reading from the N-terminus, the 87-residue chain is U3-theraphotoxin-Hhn1d (87 aa).

An N-terminal signal peptide occupies residues 1-24 (MVNMKASMFLTFAGLVLLFVVCYA). Residues 25-52 (SESEEKEFPKEMLSSIFAVDNDFKQEER) constitute a propeptide that is removed on maturation. Cystine bridges form between cysteine 54/cysteine 67, cysteine 61/cysteine 72, and cysteine 66/cysteine 79.

The protein belongs to the neurotoxin 10 (Hwtx-1) family. 51 (Hntx-8) subfamily. Hntx-8 sub-subfamily. Expressed by the venom gland.

The protein resides in the secreted. Its function is as follows. Ion channel inhibitor. The protein is U3-theraphotoxin-Hhn1d of Cyriopagopus hainanus (Chinese bird spider).